Consider the following 645-residue polypeptide: 1,4-alpha-glucan branching enzyme GlgB (645 aa).

Asp309 (nucleophile) is an active-site residue. Catalysis depends on Glu352, which acts as the Proton donor. The disordered stretch occupies residues 619-645; it reads VKTRKGSKKQDGSKTKVRSNVTSRGKR. Residues 636–645 show a composition bias toward polar residues; that stretch reads RSNVTSRGKR.

This sequence belongs to the glycosyl hydrolase 13 family. GlgB subfamily. In terms of assembly, monomer.

It catalyses the reaction Transfers a segment of a (1-&gt;4)-alpha-D-glucan chain to a primary hydroxy group in a similar glucan chain.. It participates in glycan biosynthesis; glycogen biosynthesis. In terms of biological role, catalyzes the formation of the alpha-1,6-glucosidic linkages in glycogen by scission of a 1,4-alpha-linked oligosaccharide from growing alpha-1,4-glucan chains and the subsequent attachment of the oligosaccharide to the alpha-1,6 position. The sequence is that of 1,4-alpha-glucan branching enzyme GlgB from Bacillus cereus (strain G9842).